The following is a 317-amino-acid chain: 2-keto-3-deoxygluconate permease 1 (317 aa).

10 helical membrane passes run 10–30 (VPGG…TFAP), 47–67 (AAPL…VKAA), 82–102 (LLVA…EGIF), 106–126 (GVAI…ALVG), 134–154 (VGAI…IALG), 159–179 (ANIP…GMIL), 195–215 (PLLI…EMLL), 217–237 (GGLA…FFNI), 248–268 (IAGA…LAIA), and 279–299 (AAAA…TPVL).

It belongs to the KdgT transporter family.

Its subcellular location is the cell inner membrane. It carries out the reaction 2-dehydro-3-deoxy-D-gluconate(in) + H(+)(in) = 2-dehydro-3-deoxy-D-gluconate(out) + H(+)(out). Functionally, catalyzes the proton-dependent uptake of 2-keto-3-deoxygluconate (KDG) into the cell. This chain is 2-keto-3-deoxygluconate permease 1, found in Salmonella typhi.